Consider the following 316-residue polypeptide: Ribosomal RNA small subunit methyltransferase H (316 aa).

S-adenosyl-L-methionine-binding positions include 35-37, D55, F84, D105, and Q112; that span reads AGH.

This sequence belongs to the methyltransferase superfamily. RsmH family.

The protein resides in the cytoplasm. The enzyme catalyses cytidine(1402) in 16S rRNA + S-adenosyl-L-methionine = N(4)-methylcytidine(1402) in 16S rRNA + S-adenosyl-L-homocysteine + H(+). Specifically methylates the N4 position of cytidine in position 1402 (C1402) of 16S rRNA. In Streptococcus thermophilus (strain ATCC BAA-250 / LMG 18311), this protein is Ribosomal RNA small subunit methyltransferase H.